The primary structure comprises 179 residues: Large ribosomal subunit protein uL6 (179 aa).

The protein belongs to the universal ribosomal protein uL6 family. Part of the 50S ribosomal subunit.

In terms of biological role, this protein binds to the 23S rRNA, and is important in its secondary structure. It is located near the subunit interface in the base of the L7/L12 stalk, and near the tRNA binding site of the peptidyltransferase center. In Chloroherpeton thalassium (strain ATCC 35110 / GB-78), this protein is Large ribosomal subunit protein uL6.